Here is a 335-residue protein sequence, read N- to C-terminus: MIKEAILKVVNGNDLNAKEAYGAMDEIMSGESSEVQMSAYLTALSMKGETIEEITASTKAMRAHCVKLLNDEEVLEIVGTGGDGSNTFNISTTSSIVISAAGVPVAKHGNRSASSKCGAADVLEALGVNIYIEPEKSLKILKEINLCFLFAQNYHLAMKFVAGVRKELSIRTIFNILGPLTNPAGATMQVLGVYDESLVKPLCEVLKNVGVKSALSVYGQDGLDEISVSDKTSVCELRDGRLKCYEIAPEDFGMERCSKEDLVGGNPRENAEITLSILNGQKGPKRNAVVLNSAAALYVAGKADSIEDGVRLASEIIDSGRAKKQLEKFIEYTNS.

5-phospho-alpha-D-ribose 1-diphosphate is bound by residues G79, 82-83 (GD), T87, 89-92 (NIST), 107-115 (KHGNRSASS), and A119. G79 is an anthranilate binding site. S91 is a binding site for Mg(2+). Position 110 (N110) interacts with anthranilate. R165 contacts anthranilate. The Mg(2+) site is built by D224 and E225.

Belongs to the anthranilate phosphoribosyltransferase family. Homodimer. It depends on Mg(2+) as a cofactor.

It catalyses the reaction N-(5-phospho-beta-D-ribosyl)anthranilate + diphosphate = 5-phospho-alpha-D-ribose 1-diphosphate + anthranilate. It participates in amino-acid biosynthesis; L-tryptophan biosynthesis; L-tryptophan from chorismate: step 2/5. Functionally, catalyzes the transfer of the phosphoribosyl group of 5-phosphorylribose-1-pyrophosphate (PRPP) to anthranilate to yield N-(5'-phosphoribosyl)-anthranilate (PRA). The protein is Anthranilate phosphoribosyltransferase of Methanobrevibacter smithii (strain ATCC 35061 / DSM 861 / OCM 144 / PS).